We begin with the raw amino-acid sequence, 446 residues long: Maltoporin (446 aa).

Positions 1–25 are cleaved as a signal peptide; it reads MMITLRKLPLAVAVAAGVMSAQAMA.

The protein belongs to the porin LamB (TC 1.B.3) family. In terms of assembly, homotrimer formed of three 18-stranded antiparallel beta-barrels, containing three independent channels.

It is found in the cell outer membrane. The catalysed reaction is beta-maltose(in) = beta-maltose(out). Functionally, involved in the transport of maltose and maltodextrins. In Escherichia coli O7:K1 (strain IAI39 / ExPEC), this protein is Maltoporin.